A 349-amino-acid chain; its full sequence is Probable trehalose-phosphate phosphatase H (349 aa).

The protein belongs to the trehalose phosphatase family. A divalent metal cation serves as cofactor.

It carries out the reaction alpha,alpha-trehalose 6-phosphate + H2O = alpha,alpha-trehalose + phosphate. It participates in glycan biosynthesis; trehalose biosynthesis. In terms of biological role, removes the phosphate from trehalose 6-phosphate to produce free trehalose. Trehalose accumulation in plant may improve abiotic stress tolerance. The sequence is that of Probable trehalose-phosphate phosphatase H (TPPH) from Arabidopsis thaliana (Mouse-ear cress).